A 418-amino-acid polypeptide reads, in one-letter code: tRNA-2-methylthio-N(6)-dimethylallyladenosine synthase (418 aa).

In terms of domain architecture, MTTase N-terminal spans 1–118 (MNYLIETIGC…ALKIMNLFRT (118 aa)). Cysteine 10, cysteine 46, cysteine 80, cysteine 143, cysteine 147, and cysteine 150 together coordinate [4Fe-4S] cluster. The region spanning 129–356 (IKSKIVRYIT…LKESNKISIE (228 aa)) is the Radical SAM core domain. A TRAM domain is found at 359 to 418 (SEMLGSTQQVLAEEIKNGIIKARTKNGRKVFAEGRKEYIGKHINVNIKEAKINSLFGDIV).

This sequence belongs to the methylthiotransferase family. MiaB subfamily. Monomer. Requires [4Fe-4S] cluster as cofactor.

It localises to the cytoplasm. It catalyses the reaction N(6)-dimethylallyladenosine(37) in tRNA + (sulfur carrier)-SH + AH2 + 2 S-adenosyl-L-methionine = 2-methylsulfanyl-N(6)-dimethylallyladenosine(37) in tRNA + (sulfur carrier)-H + 5'-deoxyadenosine + L-methionine + A + S-adenosyl-L-homocysteine + 2 H(+). Its function is as follows. Catalyzes the methylthiolation of N6-(dimethylallyl)adenosine (i(6)A), leading to the formation of 2-methylthio-N6-(dimethylallyl)adenosine (ms(2)i(6)A) at position 37 in tRNAs that read codons beginning with uridine. This chain is tRNA-2-methylthio-N(6)-dimethylallyladenosine synthase, found in Endomicrobium trichonymphae.